The sequence spans 460 residues: MAVSLWQQCIGRLQDELSAQQFSMWIRPLQAEMDGDTLVLYAPNRFVLDWVRDKYINIINQFFTEQMGNDAPKLRFDIGSRPSAKKPEPAPVAAVRVPNPQTKASVGTSFNTTEPVANANHRSNINPTYQFDNFVEGKSNQLGKAAALQVAENPGGAYNPLFLYGGTGLGKTHLLHAVGNGIIKNNPDAKVVYMHSERFVQDMVKALQNNAIEEFKRYYRSVDALFIDDIQFFANKDRSQEEFFHTFNALLEGNHQIILTSDRYPKEIDGVEDRLKSRFGWGLTVAIEPPELETRVAILMRKAQESGINLPDEVAFFIAKRLRSNVRELEGALNRVIANANFTGRPITIDFVREALRDLLALQEKLVTIDNIQKTVAEYYKIKMADMLSKRRSRSVARPRQVAMALSKELTNQSLPEIGDAFGGRDHTTVLHACRKIAQLREESHDIKEDYANLIRTLSS.

The tract at residues 1–84 (MAVSLWQQCI…RFDIGSRPSA (84 aa)) is domain I, interacts with DnaA modulators. Residues 84–123 (AKKPEPAPVAAVRVPNPQTKASVGTSFNTTEPVANANHRS) are domain II. Positions 124-340 (NINPTYQFDN…GALNRVIANA (217 aa)) are domain III, AAA+ region. 4 residues coordinate ATP: Gly168, Gly170, Lys171, and Thr172. A domain IV, binds dsDNA region spans residues 341–460 (NFTGRPITID…YANLIRTLSS (120 aa)).

The protein belongs to the DnaA family. As to quaternary structure, oligomerizes as a right-handed, spiral filament on DNA at oriC.

The protein localises to the cytoplasm. Functionally, plays an essential role in the initiation and regulation of chromosomal replication. ATP-DnaA binds to the origin of replication (oriC) to initiate formation of the DNA replication initiation complex once per cell cycle. Binds the DnaA box (a 9 base pair repeat at the origin) and separates the double-stranded (ds)DNA. Forms a right-handed helical filament on oriC DNA; dsDNA binds to the exterior of the filament while single-stranded (ss)DNA is stabiized in the filament's interior. The ATP-DnaA-oriC complex binds and stabilizes one strand of the AT-rich DNA unwinding element (DUE), permitting loading of DNA polymerase. After initiation quickly degrades to an ADP-DnaA complex that is not apt for DNA replication. Binds acidic phospholipids. This is Chromosomal replication initiator protein DnaA from Shewanella sp. (strain ANA-3).